The primary structure comprises 236 residues: Chorionic somatomammotropin hormone 1 (236 aa).

Residues 1-36 form the signal peptide; it reads MAPASSHRGHQWICDLVRGSCLLLLLVVSNLLLCQG. Asn89 is a glycosylation site (N-linked (GlcNAc...) asparagine). Cystine bridges form between Cys98/Cys214 and Cys231/Cys236.

The protein belongs to the somatotropin/prolactin family.

It is found in the secreted. In Bos taurus (Bovine), this protein is Chorionic somatomammotropin hormone 1 (CSH1).